The sequence spans 171 residues: Adenine phosphoribosyltransferase (171 aa).

It belongs to the purine/pyrimidine phosphoribosyltransferase family. In terms of assembly, homodimer.

The protein localises to the cytoplasm. It carries out the reaction AMP + diphosphate = 5-phospho-alpha-D-ribose 1-diphosphate + adenine. Its pathway is purine metabolism; AMP biosynthesis via salvage pathway; AMP from adenine: step 1/1. In terms of biological role, catalyzes a salvage reaction resulting in the formation of AMP, that is energically less costly than de novo synthesis. The protein is Adenine phosphoribosyltransferase of Trichlorobacter lovleyi (strain ATCC BAA-1151 / DSM 17278 / SZ) (Geobacter lovleyi).